A 1274-amino-acid polypeptide reads, in one-letter code: Myosin-binding protein C, cardiac-type (1274 aa).

Met1 bears the N-acetylmethionine mark. The region spanning 8 to 95 (PVSAFTKKPR…SKVKFDLKVT (88 aa)) is the Ig-like C2-type 1 domain. Ser47 carries the post-translational modification Phosphoserine. A compositionally biased stretch (basic and acidic residues) spans 95 to 104 (TEPAPPEKAE). Residues 95-153 (TEPAPPEKAESAVAPTSMEAPETPKEVPALATQLEGNVSSPEGSVSVTQDGSVAGSQGA) form a disordered region. A Phosphothreonine modification is found at Thr117. Over residues 128–149 (LEGNVSSPEGSVSVTQDGSVAG) the composition is skewed to polar residues. The Ig-like C2-type 2 domain occupies 157–259 (PIGLFLMRPQ…KFDSCNFNLT (103 aa)). Residues Gln212, His214, Glu227, and His229 each contribute to the Zn(2+) site. Ser279 bears the Phosphoserine mark. Thr287 bears the Phosphothreonine; by PKA and PKC mark. Residue Ser288 is modified to Phosphoserine. Phosphoserine; by PKA is present on Ser307. 2 positions are modified to phosphoserine: Ser312 and Ser427. Ig-like C2-type domains lie at 361–452 (KKST…VKEP) and 452–546 (PPVL…KKLE). A disulfide bond links Cys436 and Cys443. Phosphoserine occurs at positions 459 and 550. Thr607 is subject to Phosphothreonine. The Ig-like C2-type 5 domain maps to 645-765 (PKIHLDCPGS…PVGEDQVNLT (121 aa)). Fibronectin type-III domains follow at residues 774–870 (APAA…IGPP) and 872–967 (EPTH…VQEI). Positions 971–1059 (PRLQLPRHLR…ENMEDKATLV (89 aa)) constitute an Ig-like C2-type 6 domain. Positions 1068 to 1163 (PPLDIRVVET…TKEPIFIPRP (96 aa)) constitute a Fibronectin type-III 3 domain. Residues 1181-1269 (PSFTQPLTNR…GEAQCECRLE (89 aa)) enclose the Ig-like C2-type 7 domain. At Arg1241 the chain carries Omega-N-methylarginine.

This sequence belongs to the immunoglobulin superfamily. MyBP family. Post-translationally, substrate for phosphorylation by PKA and PKC. Reversible phosphorylation appears to modulate contraction. In terms of processing, polyubiquitinated.

In terms of biological role, thick filament-associated protein located in the crossbridge region of vertebrate striated muscle a bands. In vitro it binds MHC, F-actin and native thin filaments, and modifies the activity of actin-activated myosin ATPase. It may modulate muscle contraction or may play a more structural role. This Rattus norvegicus (Rat) protein is Myosin-binding protein C, cardiac-type (Mybpc3).